Here is a 231-residue protein sequence, read N- to C-terminus: Large ribosomal subunit protein uL1 (231 aa).

The protein belongs to the universal ribosomal protein uL1 family. In terms of assembly, part of the 50S ribosomal subunit.

Binds directly to 23S rRNA. The L1 stalk is quite mobile in the ribosome, and is involved in E site tRNA release. Its function is as follows. Protein L1 is also a translational repressor protein, it controls the translation of the L11 operon by binding to its mRNA. The chain is Large ribosomal subunit protein uL1 from Ectopseudomonas mendocina (strain ymp) (Pseudomonas mendocina).